We begin with the raw amino-acid sequence, 167 residues long: MICKNSIVTSSSKLFYKMFFIAISIEILEYNYIYPLCIEIAQHSGNIKIALCLKEILQKKKYNLILLKIASIVISNFLSTNTYSFIYTPYDVEILFSNLLLEKYEKDKEMSYMIDVFTKLSHLKQNIIYPYLFNQLKHDCNKKHIFLLLKKIDYTDISTFTHSIFIK.

Its subcellular location is the plastid. It is found in the chloroplast. This is an uncharacterized protein from Mesostigma viride (Green alga).